The primary structure comprises 535 residues: Signal transduction histidine-protein kinase AfsQ2 (535 aa).

Residues 1-30 (MTREHQGGTRGLAAARKGFWSGLRFTSLRL) lie on the Cytoplasmic side of the membrane. A helical transmembrane segment spans residues 31-52 (RLVLVFGLVALTAAVSASGIAY). Topologically, residues 53–198 (WLNREAVLTR…SLEPEAKDLN (146 aa)) are extracellular. A helical transmembrane segment spans residues 199–219 (SLAWSLGIATALALLGSALLA). Topologically, residues 220 to 535 (QALATTVLKP…DRGKDAKGQV (316 aa)) are cytoplasmic. The 53-residue stretch at 224–276 (TTVLKPVHRLGVAARRLGEGKLDTRLRVSGTDELADLSRTFNSAAENLEKRVA) folds into the HAMP domain. Positions 291-510 (DMSHELRTPL…VFTLRLPQDP (220 aa)) constitute a Histidine kinase domain. His294 carries the post-translational modification Phosphohistidine. The interval 493–535 (ENAPEGGAVFTLRLPQDPSPPADEDGGPDEETEDRGKDAKGQV) is disordered. Residues 514 to 525 (ADEDGGPDEETE) show a composition bias toward acidic residues. Residues 526–535 (DRGKDAKGQV) show a composition bias toward basic and acidic residues.

The protein localises to the cell membrane. The catalysed reaction is ATP + protein L-histidine = ADP + protein N-phospho-L-histidine.. In terms of biological role, forms part of a two-component regulatory system AfsQ1/AfsQ2 involved in secondary metabolism. May activate AfsQ1 by phosphorylation. This is Signal transduction histidine-protein kinase AfsQ2 (afsQ2) from Streptomyces coelicolor (strain ATCC BAA-471 / A3(2) / M145).